Consider the following 477-residue polypeptide: 3-isopropylmalate dehydratase large subunit (477 aa).

[4Fe-4S] cluster-binding residues include C358, C419, and C422.

Belongs to the aconitase/IPM isomerase family. LeuC type 1 subfamily. As to quaternary structure, heterodimer of LeuC and LeuD. Requires [4Fe-4S] cluster as cofactor.

It catalyses the reaction (2R,3S)-3-isopropylmalate = (2S)-2-isopropylmalate. The protein operates within amino-acid biosynthesis; L-leucine biosynthesis; L-leucine from 3-methyl-2-oxobutanoate: step 2/4. Catalyzes the isomerization between 2-isopropylmalate and 3-isopropylmalate, via the formation of 2-isopropylmaleate. In Acinetobacter baylyi (strain ATCC 33305 / BD413 / ADP1), this protein is 3-isopropylmalate dehydratase large subunit.